Here is a 244-residue protein sequence, read N- to C-terminus: MNEKNIKHSQNFITSKHNIDKIMTNIRLNEHDNIFEIGSGKGHFTLELVQRCNFVTAIEIDHKLCKTTENKLVDHDNFQVLNKDILQFKFPKNQSYKIFGNIPYNISTDIIRKIVFDSIADEIYLIVEYGFAKRLLNTKRSLALFLMAEVDISILSMVPREYFHPKPKVNSSLIRLNRKKSRISHKDKQKYNYFVMKWVNKEYKKIFTKNQFNNSLKHAGIDDLNNISFEQFLSLFNSYKLFNK.

Positions 11, 13, 38, 59, 84, and 101 each coordinate S-adenosyl-L-methionine.

The protein belongs to the class I-like SAM-binding methyltransferase superfamily. rRNA adenine N(6)-methyltransferase family.

It carries out the reaction adenosine(2085) in 23S rRNA + 2 S-adenosyl-L-methionine = N(6)-dimethyladenosine(2085) in 23S rRNA + 2 S-adenosyl-L-homocysteine + 2 H(+). Functionally, this protein produces a dimethylation of the adenine residue at position 2085 in 23S rRNA, resulting in reduced affinity between ribosomes and macrolide-lincosamide-streptogramin B antibiotics. In Bacillus subtilis, this protein is rRNA adenine N-6-methyltransferase (ermC').